The chain runs to 195 residues: Small ribosomal subunit protein uS4c (195 aa).

One can recognise an S4 RNA-binding domain in the interval 82–143 (MRLDNILFRL…KQRSKALIQN (62 aa)).

It belongs to the universal ribosomal protein uS4 family. Part of the 30S ribosomal subunit. Contacts protein S5. The interaction surface between S4 and S5 is involved in control of translational fidelity.

It localises to the plastid. It is found in the chloroplast. One of the primary rRNA binding proteins, it binds directly to 16S rRNA where it nucleates assembly of the body of the 30S subunit. Its function is as follows. With S5 and S12 plays an important role in translational accuracy. This is Small ribosomal subunit protein uS4c (rps4) from Pillansia templemannii.